We begin with the raw amino-acid sequence, 636 residues long: Methionine--tRNA ligase (636 aa).

Residues 12-22 (YYVNGDPHVGS) carry the 'HIGH' region motif. Zn(2+) is bound by residues C127, C130, C145, and C148. Positions 298-302 (KMSKS) match the 'KMSKS' region motif. K301 is a binding site for ATP. Residues 535–636 (EFNKIEIKVV…KTVEAGAIVS (102 aa)) form the tRNA-binding domain.

It belongs to the class-I aminoacyl-tRNA synthetase family. MetG type 2A subfamily. As to quaternary structure, homodimer. Requires Zn(2+) as cofactor.

It is found in the cytoplasm. The enzyme catalyses tRNA(Met) + L-methionine + ATP = L-methionyl-tRNA(Met) + AMP + diphosphate. Is required not only for elongation of protein synthesis but also for the initiation of all mRNA translation through initiator tRNA(fMet) aminoacylation. In Fusobacterium nucleatum subsp. nucleatum (strain ATCC 25586 / DSM 15643 / BCRC 10681 / CIP 101130 / JCM 8532 / KCTC 2640 / LMG 13131 / VPI 4355), this protein is Methionine--tRNA ligase (metG).